Consider the following 924-residue polypeptide: Ubiquitin carboxyl-terminal hydrolase 5 (924 aa).

Positions 15 to 145 constitute a DUSP domain; sequence LSPEEERVFI…GPTLARRVIS (131 aa). A compositionally biased stretch (polar residues) spans 64–83; the sequence is TNDGSSLSEHCDSPGSSTLK. The disordered stretch occupies residues 64-87; sequence TNDGSSLSEHCDSPGSSTLKKPSR. Residues 317–916 enclose the USP domain; that stretch reads TGLLNLGNTC…AAYVLFYRRK (600 aa). Residue Cys-326 is the Nucleophile of the active site. Residues 648–667 are compositionally biased toward basic and acidic residues; that stretch reads REESVGKKGNSDSSIPERRS. The interval 648-690 is disordered; sequence REESVGKKGNSDSSIPERRSARFNNTEEEDKVGGLKKAKKSNS. His-874 acts as the Proton acceptor in catalysis.

The protein belongs to the peptidase C19 family.

It catalyses the reaction Thiol-dependent hydrolysis of ester, thioester, amide, peptide and isopeptide bonds formed by the C-terminal Gly of ubiquitin (a 76-residue protein attached to proteins as an intracellular targeting signal).. In terms of biological role, recognizes and hydrolyzes the peptide bond at the C-terminal Gly of ubiquitin. Involved in the processing of poly-ubiquitin precursors as well as that of ubiquitinated proteins. This chain is Ubiquitin carboxyl-terminal hydrolase 5 (UBP5), found in Arabidopsis thaliana (Mouse-ear cress).